The chain runs to 57 residues: UPF0391 membrane protein RB0084 (57 aa).

The next 2 membrane-spanning stretches (helical) occupy residues 4 to 24 (WALIFFVISLIAGFLGFSGVS) and 33 to 53 (ILFYIAVIIFLVFLVLALAVG).

The protein belongs to the UPF0391 family.

It localises to the cell membrane. The polypeptide is UPF0391 membrane protein RB0084 (Rhizobium meliloti (strain 1021) (Ensifer meliloti)).